Consider the following 471-residue polypeptide: Probable flavin-containing monoamine oxidase B (471 aa).

Residue cysteine 406 is modified to S-8alpha-FAD cysteine.

This sequence belongs to the flavin monoamine oxidase family. It depends on FAD as a cofactor.

The catalysed reaction is a secondary aliphatic amine + O2 + H2O = a primary amine + an aldehyde + H2O2. The protein is Probable flavin-containing monoamine oxidase B (maoB-1) of Dictyostelium discoideum (Social amoeba).